The sequence spans 576 residues: Putative ankyrin repeat protein L86 (576 aa).

ANK repeat units follow at residues 68 to 101 (HGWT…DPNI), 118 to 147 (TRIN…NVNF), 159 to 188 (SGGF…NPNI), 192 to 223 (KGNT…DLNS), 227 to 260 (KRKT…NPNI), 264 to 300 (KGNT…NPNI), 304 to 337 (SGIS…DPNI), 341 to 373 (QGLT…DPNI), 377 to 408 (KGKN…NPNA), 412 to 446 (KGRT…SLTD), and 448 to 480 (NGKK…TFDV).

The chain is Putative ankyrin repeat protein L86 from Acanthamoeba polyphaga mimivirus (APMV).